The chain runs to 239 residues: Pimeloyl-[acyl-carrier protein] methyl ester esterase (239 aa).

Residues W20, 77–78, and 138–142 each bind substrate; these read SM and FISLQ. The Nucleophile role is filled by S77. Catalysis depends on residues D192 and H220. H220 provides a ligand contact to substrate.

This sequence belongs to the AB hydrolase superfamily. Carboxylesterase BioH family. In terms of assembly, monomer.

It localises to the cytoplasm. The catalysed reaction is 6-carboxyhexanoyl-[ACP] methyl ester + H2O = 6-carboxyhexanoyl-[ACP] + methanol + H(+). The protein operates within cofactor biosynthesis; biotin biosynthesis. The physiological role of BioH is to remove the methyl group introduced by BioC when the pimeloyl moiety is complete. It allows to synthesize pimeloyl-ACP via the fatty acid synthetic pathway through the hydrolysis of the ester bonds of pimeloyl-ACP esters. In Legionella pneumophila (strain Paris), this protein is Pimeloyl-[acyl-carrier protein] methyl ester esterase.